The primary structure comprises 151 residues: UPF0178 protein YaiI (151 aa).

Belongs to the UPF0178 family.

The chain is UPF0178 protein YaiI from Salmonella paratyphi C (strain RKS4594).